A 110-amino-acid chain; its full sequence is Insulin (110 aa).

The signal sequence occupies residues 1–24 (MALWTRLLPLLALLALLGPDPAQA). 3 disulfides stabilise this stretch: C31–C96, C43–C109, and C95–C100. Residues 57–87 (EVEEQQGGQVELGGGPGAGLPQPLALEMALQ) constitute a propeptide, c peptide.

The protein belongs to the insulin family. As to quaternary structure, heterodimer of a B chain and an A chain linked by two disulfide bonds.

The protein localises to the secreted. Its function is as follows. Insulin decreases blood glucose concentration. It increases cell permeability to monosaccharides, amino acids and fatty acids. It accelerates glycolysis, the pentose phosphate cycle, and glycogen synthesis in liver. This is Insulin (INS) from Ictidomys tridecemlineatus (Thirteen-lined ground squirrel).